A 632-amino-acid polypeptide reads, in one-letter code: Probable extracellular metalloproteinase 2 (632 aa).

Positions 1-19 (MHGLLLAGLAAALPLGVAG) are cleaved as a signal peptide. The propeptide occupies 20 to 244 (LPARQQSGLS…VHNVVDYVAS (225 aa)). N81 and N270 each carry an N-linked (GlcNAc...) asparagine glycan. H429 serves as a coordination point for Zn(2+). Residue E430 is part of the active site. H433 contributes to the Zn(2+) binding site.

Belongs to the peptidase M36 family. Requires Zn(2+) as cofactor.

It is found in the secreted. Secreted metalloproteinase probably acting as a virulence factor. The chain is Probable extracellular metalloproteinase 2 (MEP2) from Arthroderma benhamiae (strain ATCC MYA-4681 / CBS 112371) (Trichophyton mentagrophytes).